A 548-amino-acid polypeptide reads, in one-letter code: CBS domain-containing protein CBSCBSPB4 (548 aa).

The segment covering 1–18 has biased composition (polar residues); it reads MANQGGPSRKSLSFSGHS. The disordered stretch occupies residues 1 to 58; the sequence is MANQGGPSRKSLSFSGHSFQGRKKASENEGGGGGGSDLLPRRSLTSSRSSISLSGERS. A Phosphoserine modification is found at Ser-18. Over residues 37 to 56 the composition is skewed to low complexity; sequence DLLPRRSLTSSRSSISLSGE. CBS domains follow at residues 63 to 126, 133 to 190, 233 to 293, and 301 to 358; these read VKRL…NLEE, MTKN…ERSV, IIPE…LPQE, and MTPN…AGST. The region spanning 411 to 498 is the PB1 domain; the sequence is PNTFAFKLQD…KGLKLHLDYT (88 aa). The chain crosses the membrane as a helical span at residues 521-543; it reads AAAYKTVAAGAALAAGLGVLVYL.

It localises to the membrane. This chain is CBS domain-containing protein CBSCBSPB4 (CBSCBSPB4), found in Arabidopsis thaliana (Mouse-ear cress).